Consider the following 208-residue polypeptide: Mediator of RNA polymerase II transcription subunit 18 (208 aa).

Ser66 is modified (phosphoserine).

Belongs to the Mediator complex subunit 18 family. Component of the Mediator complex, which is composed of MED1, MED4, MED6, MED7, MED8, MED9, MED10, MED11, MED12, MED13, MED13L, MED14, MED15, MED16, MED17, MED18, MED19, MED20, MED21, MED22, MED23, MED24, MED25, MED26, MED27, MED29, MED30, MED31, CCNC, CDK8 and CDC2L6/CDK11. The MED12, MED13, CCNC and CDK8 subunits form a distinct module termed the CDK8 module. Mediator containing the CDK8 module is less active than Mediator lacking this module in supporting transcriptional activation. Individual preparations of the Mediator complex lacking one or more distinct subunits have been variously termed ARC, CRSP, DRIP, PC2, SMCC and TRAP.

The protein resides in the nucleus. Functionally, component of the Mediator complex, a coactivator involved in the regulated transcription of nearly all RNA polymerase II-dependent genes. Mediator functions as a bridge to convey information from gene-specific regulatory proteins to the basal RNA polymerase II transcription machinery. Mediator is recruited to promoters by direct interactions with regulatory proteins and serves as a scaffold for the assembly of a functional preinitiation complex with RNA polymerase II and the general transcription factors. The sequence is that of Mediator of RNA polymerase II transcription subunit 18 (MED18) from Bos taurus (Bovine).